The sequence spans 413 residues: Tyrosine--tRNA ligase (413 aa).

Tyr34 contacts L-tyrosine. The 'HIGH' region motif lies at 39–48 (CTAQSLHVGN). The L-tyrosine site is built by Tyr171 and Gln175. Positions 231–235 (KMGKT) match the 'KMSKS' region motif. Lys234 contacts ATP. One can recognise an S4 RNA-binding domain in the interval 346 to 411 (IPITELLVTI…GKKCHILVKI (66 aa)).

Belongs to the class-I aminoacyl-tRNA synthetase family. TyrS type 1 subfamily. As to quaternary structure, homodimer.

The protein localises to the cytoplasm. The catalysed reaction is tRNA(Tyr) + L-tyrosine + ATP = L-tyrosyl-tRNA(Tyr) + AMP + diphosphate + H(+). Its function is as follows. Catalyzes the attachment of tyrosine to tRNA(Tyr) in a two-step reaction: tyrosine is first activated by ATP to form Tyr-AMP and then transferred to the acceptor end of tRNA(Tyr). In Orientia tsutsugamushi (strain Ikeda) (Rickettsia tsutsugamushi), this protein is Tyrosine--tRNA ligase.